The chain runs to 255 residues: ATP synthase subunit a (255 aa).

Positions methionine 1–asparagine 6 are cleaved as a propeptide — removed in mature form. Helical transmembrane passes span leucine 32–leucine 52, leucine 91–valine 111, leucine 121–alanine 141, proline 159–leucine 200, and leucine 219–alanine 251.

F-type ATP synthases have 2 components, the catalytic core F(1) and the membrane-embedded component F(0), linked together by a central stalk and a peripheral stalk. The central stalk, also called rotor shaft, is often seen as part of F(1). The peripheral stalk is seen as part of F(0). F(0) contains the membrane channel next to the rotor. F-type ATP synthases form dimers but each monomer functions independently in ATP generation. The dimer consists of 17 different polypeptides: ATP1 (subunit alpha, 3 molecules per monomer, part of F(1)), ATP2 (subunit beta, 3 copies per monomer, part of F(1)), ATP3 (subunit gamma, part of the central stalk), ATP4 (subunit b, part of the peripheral stalk), ATP5/OSCP (subunit 5/OSCP, part of the peripheral stalk), ATP6 (subunit a, part of the peripheral stalk), ATP7 (subunit d, part of the peripheral stalk), ATP8 (subunit 8, part of the peripheral stalk), OLI1 (subunit c, part of the rotor, 10 molecules per monomer), ATP14 (subunit h, part of the peripheral stalk), ATP15 (subunit epsilon, part of the central stalk), ATP16 (subunit delta, part of the central stalk), ATP17 (subunit f, part of the peripheral stalk), ATP18 (subunit i/j, part of the peripheral stalk), ATP19 (subunit k, dimer-specific, at interface between monomers), ATP20 (subunit g, at interface between monomers), TIM11 (subunit e, at interface between monomers).

The protein localises to the mitochondrion inner membrane. Its function is as follows. Mitochondrial membrane ATP synthase (F(1)F(0) ATP synthase or Complex V) produces ATP from ADP in the presence of a proton gradient across the membrane which is generated by electron transport complexes of the respiratory chain. F-type ATP synthases consist of two structural domains, F(1) - containing the extramembraneous catalytic core, and F(0) - containing the membrane proton channel, linked together by a central stalk and a peripheral stalk. During catalysis, ATP synthesis in the catalytic domain of F(1) is coupled via a rotary mechanism of the central stalk subunits to proton translocation. Key component of the proton channel; it may play a direct role in the translocation of protons across the membrane. The polypeptide is ATP synthase subunit a (Yarrowia lipolytica (strain CLIB 122 / E 150) (Yeast)).